A 1499-amino-acid polypeptide reads, in one-letter code: MEREPAGTEEPGPPGRRRRREGRTRTVRSNLLPPPGAEDPAAGAAKGERRRRRGCAQHLADNRLKTTKYTLLSFLPKNLFEQFHRPANVYFVFIALLNFVPAVNAFQPGLALAPVLFILAITAFRDLWEDYSRHRSDHKINHLGCLVFSREEKKYVNRFWKEIHVGDFVRLRCNEIFPADILLLSSSDPDGLCHIETANLDGETNLKRRQVVRGFSELVSEFNPLTFTSVIECEKPNNDLSRFRGCIIHDNGKKAGLYKENLLLRGCTLRNTDAVVGIVIYAGHETKALLNNSGPRYKRSKLERQMNCDVLWCVLLLVCMSLFSAVGHGLWIWRYQEKKSLFYVPKSDGSSLSPVTAAVYSFLTMIIVLQVLIPISLYVSIEIVKACQVYFINQDMQLYDEETDSQLQCRALNITEDLGQIQYIFSDKTGTLTENKMVFRRCTVSGVEYSHDANAQRLARYQEADSEEEEVVPRGGSVSQRGSIGSHQSVRVVHRTQSTKSHRRTGSRAEAKRASMLSKHTAFSSPMEKDITPDPKLLEKVSECDKSLAVARHQEHLLAHLSPELSDVFDFFIALTICNTVVVTSPDQPRTKVRVRFELKSPVKTIEDFLRRFTPSCLTSGCSSIGSLAANKSSHKLGSSFPSTPSSDGMLLRLEERLGQPTSAIASNGYSSQADNWASELAQEQESERELRYEAESPDEAALVYAARAYNCVLVERLHDQVSVELPHLGRLTFELLHTLGFDSVRKRMSVVIRHPLTDEINVYTKGADSVVMDLLQPCSSVDARGRHQKKIRSKTQNYLNVYAAEGLRTLCIAKRVLSKEEYACWLQSHLEAESSLENSEELLFQSAIRLETNLHLLGATGIEDRLQDGVPETISKLRQAGLQIWVLTGDKQETAVNIAYACKLLDHDEEVITLNATSQEACAALLDQCLCYVQSRGLQRAPEKTKGKVSMRFSSLCPPSTSTASGRRPSLVIDGRSLAYALEKNLEDKFLFLAKQCRSVLCCRSTPLQKSMVVKLVRSKLKAMTLAIGDGANDVSMIQVADVGVGISGQEGMQAVMASDFAVPKFRYLERLLILHGHWCYSRLANMVLYFFYKNTMFVGLLFWFQFFCGFSASTMIDQWYLIFFNLLFSSLPPLVTGVLDRDVPANVLLTNPQLYKSGQNMEEYRPRTFWFNMADAAFQSLVCFSIPYLAYYDSNVDLFTWGTPIVTIALLTFLLHLGIETKTWTWLNWITCGFSVLLFFTVALIYNASCATCYPPSNPYWTMQALLGDPVFYLTCLMTPVAALLPRLFFRSLQGRVFPTQLQLARQLTRKSPRRCSAPKETFAQGRLPKDSGTEHSSGRTVKTSVPLSQPSWHTQQPVCSLEASGEPSTVDMSMPVREHTLLEGLSAPAPMSSAPGEAVLRSPGGCPEESKVRAASTGRVTPLSSLFSLPTFSLLNWISSWSLVSRLGSVLQFSRTEQLADGQAGRGLPVQPHSGRSGLQGPDHRLLIGASSRRSQ.

Positions 1 to 53 (MEREPAGTEEPGPPGRRRRREGRTRTVRSNLLPPPGAEDPAAGAAKGERRRRR) are disordered. Over 1 to 86 (MEREPAGTEE…KNLFEQFHRP (86 aa)) the chain is Cytoplasmic. Positions 15–26 (GRRRRREGRTRT) are enriched in basic residues. The helical transmembrane segment at 87–106 (ANVYFVFIALLNFVPAVNAF) threads the bilayer. At 107-110 (QPGL) the chain is on the exoplasmic loop side. Residues 111 to 128 (ALAPVLFILAITAFRDLW) form a helical membrane-spanning segment. Residues 129 to 309 (EDYSRHRSDH…SKLERQMNCD (181 aa)) lie on the Cytoplasmic side of the membrane. The helical transmembrane segment at 310–332 (VLWCVLLLVCMSLFSAVGHGLWI) threads the bilayer. Residues 333 to 362 (WRYQEKKSLFYVPKSDGSSLSPVTAAVYSF) are Exoplasmic loop-facing. The chain crosses the membrane as a helical span at residues 363–384 (LTMIIVLQVLIPISLYVSIEIV). Topologically, residues 385-1087 (KACQVYFINQ…GHWCYSRLAN (703 aa)) are cytoplasmic. The active-site 4-aspartylphosphate intermediate is aspartate 427. The ATP site is built by aspartate 427, lysine 428, and threonine 429. Residue aspartate 427 coordinates Mg(2+). Residue threonine 429 coordinates Mg(2+). The tract at residues 464-531 (ADSEEEEVVP…AFSSPMEKDI (68 aa)) is disordered. Serine 466 carries the phosphoserine modification. The segment covering 477–499 (SVSQRGSIGSHQSVRVVHRTQST) has biased composition (polar residues). Positions 700, 742, 766, 809, 889, 890, 891, 1005, and 1011 each coordinate ATP. Aspartate 1031 is a binding site for Mg(2+). Asparagine 1034 and aspartate 1035 together coordinate ATP. Position 1035 (aspartate 1035) interacts with Mg(2+). Residues 1088–1108 (MVLYFFYKNTMFVGLLFWFQF) traverse the membrane as a helical segment. Topologically, residues 1109–1119 (FCGFSASTMID) are exoplasmic loop. The chain crosses the membrane as a helical span at residues 1120 to 1140 (QWYLIFFNLLFSSLPPLVTGV). Topologically, residues 1141-1170 (LDRDVPANVLLTNPQLYKSGQNMEEYRPRT) are cytoplasmic. Residues 1171–1192 (FWFNMADAAFQSLVCFSIPYLA) traverse the membrane as a helical segment. The Exoplasmic loop portion of the chain corresponds to 1193–1199 (YYDSNVD). A helical membrane pass occupies residues 1200 to 1222 (LFTWGTPIVTIALLTFLLHLGIE). Over 1223 to 1228 (TKTWTW) the chain is Cytoplasmic. The helical transmembrane segment at 1229-1249 (LNWITCGFSVLLFFTVALIYN) threads the bilayer. Topologically, residues 1250–1267 (ASCATCYPPSNPYWTMQA) are exoplasmic loop. A helical membrane pass occupies residues 1268–1292 (LLGDPVFYLTCLMTPVAALLPRLFF). Residues 1293–1499 (RSLQGRVFPT…LIGASSRRSQ (207 aa)) lie on the Cytoplasmic side of the membrane. Disordered regions lie at residues 1311–1356 (TRKS…PSWH) and 1464–1499 (DGQA…RRSQ). Residues 1330–1340 (LPKDSGTEHSS) are compositionally biased toward basic and acidic residues. Residues 1341 to 1356 (GRTVKTSVPLSQPSWH) are compositionally biased toward polar residues.

Belongs to the cation transport ATPase (P-type) (TC 3.A.3) family. Type IV subfamily. In terms of assembly, component of a P4-ATPase flippase complex which consists of a catalytic alpha subunit ATP10A and an accessory beta subunit TMEM30A. The cofactor is Mg(2+). Autophosphorylated at the conserved aspartate of the P-type ATPase signature sequence. Widely expressed, with highest levels in kidney, followed by lung, brain, prostate, testis, ovary and small intestine.

Its subcellular location is the cell membrane. The protein resides in the endoplasmic reticulum membrane. The enzyme catalyses ATP + H2O + phospholipidSide 1 = ADP + phosphate + phospholipidSide 2.. The catalysed reaction is a 1,2-diacyl-sn-glycero-3-phosphocholine(out) + ATP + H2O = a 1,2-diacyl-sn-glycero-3-phosphocholine(in) + ADP + phosphate + H(+). It carries out the reaction a beta-D-glucosyl-(1&lt;-&gt;1')-N-acylsphing-4-enine(out) + ATP + H2O = a beta-D-glucosyl-(1&lt;-&gt;1')-N-acylsphing-4-enine(in) + ADP + phosphate + H(+). Its activity is regulated as follows. Inhibited under hypotonic conditions. Functionally, catalytic component of P4-ATPase flippase complex, which catalyzes the hydrolysis of ATP coupled to the transport of phosphatidylcholine (PC) from the outer to the inner leaflet of the plasma membrane. Initiates inward plasma membrane bending and recruitment of Bin/amphiphysin/Rvs (BAR) domain-containing proteins involved in membrane tubulation and cell trafficking. Facilitates ITGB1/beta1 integrin endocytosis, delaying cell adhesion and cell spreading on extracellular matrix. Has low flippase activity toward glucosylceramide (GlcCer). The chain is Phospholipid-transporting ATPase VA from Homo sapiens (Human).